The sequence spans 308 residues: Acetylglutamate kinase (308 aa).

Substrate is bound by residues Gly-73–Gly-74, Arg-95, and Asn-194.

Belongs to the acetylglutamate kinase family. ArgB subfamily.

The protein localises to the cytoplasm. The catalysed reaction is N-acetyl-L-glutamate + ATP = N-acetyl-L-glutamyl 5-phosphate + ADP. It functions in the pathway amino-acid biosynthesis; L-arginine biosynthesis; N(2)-acetyl-L-ornithine from L-glutamate: step 2/4. Functionally, catalyzes the ATP-dependent phosphorylation of N-acetyl-L-glutamate. The polypeptide is Acetylglutamate kinase (Rhodococcus jostii (strain RHA1)).